We begin with the raw amino-acid sequence, 232 residues long: Thrombin-like enzyme BjussuSP-1 (232 aa).

The Peptidase S1 domain maps to 1 to 223; sequence VLGGDECDIN…YTDWIQRNIA (223 aa). Disulfide bonds link cysteine 7–cysteine 138, cysteine 25–cysteine 41, cysteine 73–cysteine 230, cysteine 117–cysteine 184, cysteine 149–cysteine 163, and cysteine 174–cysteine 199. Catalysis depends on histidine 40, which acts as the Charge relay system. Residue asparagine 77 is glycosylated (N-linked (GlcNAc...) asparagine). Aspartate 85 acts as the Charge relay system in catalysis. Asparagine 129 carries N-linked (GlcNAc...) asparagine glycosylation. Residue serine 178 is the Charge relay system of the active site.

This sequence belongs to the peptidase S1 family. Snake venom subfamily. As to quaternary structure, monomer. In terms of processing, N-glycosylated. Contains sialic acid residues. Deglycosylation reduces in 50% the formation of fibrin clot. In terms of tissue distribution, expressed by the venom gland.

The protein localises to the secreted. Its activity is regulated as follows. Inhibited by leupeptin, heparin, and 1.10-phenantroline. Functionally, thrombin-like enzyme that shows clotting activity upon human plasma. Shows specific fibrinogenolytic activity for Aalpha chain (FGA). Hydrolyzes fibrin, BAPNA and TAME, as well as chromogenic artificial substrates of the blood coagulation cascasde: S-27654 for factor X (F10), S-2302 for kallikrein (KLK), factor XIa (F11), and XIIa (F12), and S-2266 for kallikrein and factor XIa (F11). Subcutaneous injection into mice induces a mild edema. Intravenous and intramuscular injection reduce plasma fibrinogen concentration and increase the levels of fibrin(ogen) degradation products. Intramuscular injection also promotes an increase in the expression of proMMP-9, but is unable to activate it. The chain is Thrombin-like enzyme BjussuSP-1 from Bothrops jararacussu (Jararacussu).